We begin with the raw amino-acid sequence, 376 residues long: Ribonucleoside-diphosphate reductase 1 subunit beta (376 aa).

Residues aspartate 85, glutamate 116, and histidine 119 each contribute to the Fe cation site. Tyrosine 123 is an active-site residue. Fe cation contacts are provided by glutamate 205, glutamate 239, and histidine 242.

The protein belongs to the ribonucleoside diphosphate reductase small chain family. In terms of assembly, tetramer of two alpha (R1) and two beta (R2) subunits. The B1 protein is a dimer of alpha subunits. A radical transfer pathway occurs between Tyr-123 of R2 and R1. Fe cation serves as cofactor.

The catalysed reaction is a 2'-deoxyribonucleoside 5'-diphosphate + [thioredoxin]-disulfide + H2O = a ribonucleoside 5'-diphosphate + [thioredoxin]-dithiol. In terms of biological role, provides the precursors necessary for DNA synthesis. Catalyzes the biosynthesis of deoxyribonucleotides from the corresponding ribonucleotides. R2 contains the tyrosyl radical required for catalysis. The polypeptide is Ribonucleoside-diphosphate reductase 1 subunit beta (nrdB) (Escherichia coli O157:H7).